The chain runs to 217 residues: GTPase IMAP family member GIMD1 (217 aa).

The 212-residue stretch at 6–217 (KMIINLALFG…ENCYQVLTFK (212 aa)) folds into the AIG1-type G domain. Residues 15-23 (GMTQSGKSS), Ser36, and 148-150 (HAE) each bind GTP.

Belongs to the TRAFAC class TrmE-Era-EngA-EngB-Septin-like GTPase superfamily. AIG1/Toc34/Toc159-like paraseptin GTPase family. IAN subfamily.

This is GTPase IMAP family member GIMD1 (GIMD1) from Homo sapiens (Human).